We begin with the raw amino-acid sequence, 338 residues long: Fructose-bisphosphate aldolase (338 aa).

The substrate site is built by arginine 50 and lysine 138. Glutamate 179 serves as the catalytic Proton acceptor. Lysine 221 acts as the Schiff-base intermediate with dihydroxyacetone-P in catalysis.

It belongs to the class I fructose-bisphosphate aldolase family.

The enzyme catalyses beta-D-fructose 1,6-bisphosphate = D-glyceraldehyde 3-phosphate + dihydroxyacetone phosphate. It functions in the pathway carbohydrate degradation; glycolysis; D-glyceraldehyde 3-phosphate and glycerone phosphate from D-glucose: step 4/4. The polypeptide is Fructose-bisphosphate aldolase (Encephalitozoon cuniculi (strain GB-M1) (Microsporidian parasite)).